Consider the following 314-residue polypeptide: MSLKIVFAGTPQFAVPTLRALIDSSHRVLAVYTQPDRPSGRGQKIMESPVKEIARQNEIPIIQPFSLRDEVEQEKLIAMNADVMVVVAYGLILPKKALNAFRLGCVNVHASLLPRWRGAAPIQRAILAGDRETGISIMQMNEGLDTGDVLAKSACVISSEDTAADLHDRLSLIGADLLLESLAKLEKGDIKLEKQDEASATYASKIQKQEALIDWRKSAVEIARQVRAFNPTPIAFTYFEGQPMRIWRATVVDEKTDFEPGVLVDADKKGISIAAGSGILRLHQLQLPGKRVCSAGDFINAHGDKLIPGKTVFG.

111–114 is a (6S)-5,6,7,8-tetrahydrofolate binding site; sequence SLLP.

The protein belongs to the Fmt family.

It carries out the reaction L-methionyl-tRNA(fMet) + (6R)-10-formyltetrahydrofolate = N-formyl-L-methionyl-tRNA(fMet) + (6S)-5,6,7,8-tetrahydrofolate + H(+). Functionally, attaches a formyl group to the free amino group of methionyl-tRNA(fMet). The formyl group appears to play a dual role in the initiator identity of N-formylmethionyl-tRNA by promoting its recognition by IF2 and preventing the misappropriation of this tRNA by the elongation apparatus. The protein is Methionyl-tRNA formyltransferase of Coxiella burnetii (strain CbuG_Q212) (Coxiella burnetii (strain Q212)).